The sequence spans 2822 residues: Piezo-type mechanosensitive ion channel component 2 (2822 aa).

Over 1 to 12 the chain is Cytoplasmic; sequence MASEVVCGLIFR. Residues 13–24 traverse the membrane as a helical segment; it reads LLLPICLAVACA. Topologically, residues 25–30 are extracellular; that stretch reads FRYNGL. The chain crosses the membrane as a helical span at residues 31-43; sequence SFVYLIYLLLIPL. Topologically, residues 44–50 are cytoplasmic; it reads FSEPTKA. Residues 51-76 traverse the membrane as a helical segment; it reads TMQGHTGRLLQSLCITSLSFLLLHII. Topologically, residues 77-122 are extracellular; the sequence is FHITLASLEAQHRITPAYNCSTWEKTFRQIGFESLKGADAGNGIRV. Residue Asn-95 is glycosylated (N-linked (GlcNAc...) asparagine). The helical transmembrane segment at 123 to 141 threads the bilayer; it reads FVPDIGMFIASLTIWLVCR. At 142–221 the chain is on the cytoplasmic side; sequence TIVKKPDTEE…KEFIGNMITT (80 aa). Residues 222–237 form a helical membrane-spanning segment; that stretch reads AGKVVVTILLGSSGMM. Residues 238-240 lie on the Extracellular side of the membrane; that stretch reads LPS. The chain crosses the membrane as a helical span at residues 241-258; that stretch reads LTSAVYFFVFLGLCTWWS. Residues 259 to 264 lie on the Cytoplasmic side of the membrane; the sequence is WCRTFD. The helical transmembrane segment at 265-287 threads the bilayer; that stretch reads PLLFGCLCVLLAIFTAGHLIGLY. The Extracellular segment spans residues 288 to 335; that stretch reads LYQFQFFQEAVPPNDYYARLFGIKSVIQTDCASTWKIIVNPDLSWYHH. Residues 336-355 form a helical membrane-spanning segment; it reads ANPILLLVMYYTLATLIRIW. The Cytoplasmic segment spans residues 356-492; that stretch reads LQEPLVQEEM…SVRMHAMVAV (137 aa). Positions 450 to 481 are disordered; sequence YRWEPSEESSEKKEEEEDKREDSEGEGSQEEK. A coiled-coil region spans residues 455–482; the sequence is SEESSEKKEEEEDKREDSEGEGSQEEKR. Residues 463–477 are compositionally biased toward acidic residues; the sequence is EEEEDKREDSEGEGS. A helical transmembrane segment spans residues 493–514; it reads FQFIMKQSYICALIAMMAWSIT. The Extracellular segment spans residues 515–519; the sequence is YHSWL. The helical transmembrane segment at 520–531 threads the bilayer; it reads TFVLLIWSCTLW. The Cytoplasmic segment spans residues 532-535; the sequence is MIRN. Residues 536–562 traverse the membrane as a helical segment; sequence RRKYAMISSPFMVVYANLLLVLQYIWS. The Extracellular segment spans residues 563–583; that stretch reads FELPEIKKVPGFLEKKEPGEL. The chain crosses the membrane as a helical span at residues 584 to 614; it reads ASKILFTITFWLLLRQHLTEQKALREKEALL. At 615-689 the chain is on the cytoplasmic side; it reads SEVKIGSQEL…GNLVVALFIK (75 aa). Acidic residues-rich tracts occupy residues 624 to 633 and 643 to 652; these read LEEKEDEELQ and EKEEEEEEEI. Residues 624-668 form a disordered region; the sequence is LEEKEDEELQDVQVEGEPTEKEEEEEEEIKEERHEVKKEEEEEVE. Residues 653–662 show a composition bias toward basic and acidic residues; that stretch reads KEERHEVKKE. The chain crosses the membrane as a helical span at residues 690–703; sequence YWIYVCGGMFFFVS. Residues 704 to 709 are Extracellular-facing; it reads FEGKIV. Residues 710–728 traverse the membrane as a helical segment; sequence MYKIIYMVLFLFCVALYQV. Residues 729–737 lie on the Cytoplasmic side of the membrane; sequence HYEWWRKIL. The helical transmembrane segment at 738-757 threads the bilayer; sequence KYFWMSVVIYTMLVLIFIYT. The Extracellular portion of the chain corresponds to 758–789; sequence YQFENFPGLWQNMTGLKKEKLEDLGLKQFTVA. Residues 790 to 811 traverse the membrane as a helical segment; the sequence is ELFTRIFIPTSFLLVCILHLHY. The Cytoplasmic segment spans residues 812 to 957; it reads FHDRFLELTD…QVFMWWILEL (146 aa). Phosphoserine is present on Ser-856. Over residues 875 to 901 the composition is skewed to basic and acidic residues; sequence QKLAESGEERPEECVKKTEKGEAGKDS. A disordered region spans residues 875 to 919; sequence QKLAESGEERPEECVKKTEKGEAGKDSDESEEEEDEEEESEEEES. Over residues 902-919 the composition is skewed to acidic residues; that stretch reads DESEEEEDEEEESEEEES. A helical transmembrane segment spans residues 958–973; that stretch reads HIIKIVSSYIIWVTVK. Residues 974–979 are Extracellular-facing; it reads EVSLFN. The helical transmembrane segment at 980–989 threads the bilayer; the sequence is YVFLISWAFA. The Cytoplasmic segment spans residues 990-997; it reads LPYAKLRR. Residues 998-1018 form a helical membrane-spanning segment; sequence AASSVCTVWTCVIIVCKMLYQ. The Extracellular portion of the chain corresponds to 1019–1074; sequence LQTIKPENFSVNCSLPNENQTNIPLHELNKSLLYSAPVDPTEWVGLRKSSPLLVYL. N-linked (GlcNAc...) asparagine glycosylation is present at Asn-1030. The cysteines at positions 1031 and 1209 are disulfide-linked. The helical transmembrane segment at 1075 to 1099 threads the bilayer; that stretch reads RNNLLMLAILAFEVTVYRHQEYYRG. At 1100 to 1140 the chain is on the cytoplasmic side; sequence RNNLTAPVSKTIFHDITRLHLDDGLINCAKYFVNYFFYKFG. The chain crosses the membrane as a helical span at residues 1141–1155; it reads LETCFLMSVNVIGQR. The Extracellular segment spans residues 1156 to 1157; the sequence is MD. A helical transmembrane segment spans residues 1158–1171; sequence FYAMIHACWLIGVL. At 1172–1182 the chain is on the cytoplasmic side; the sequence is YRRRRKAIAEV. A helical transmembrane segment spans residues 1183–1202; sequence WPKYCCFLACIITFQYFVCI. Residues 1203 to 1239 lie on the Extracellular side of the membrane; that stretch reads GIPPAPCRDYPWRFKGAYFNDNIIKWLYFPDFIVRPN. Residues 1240 to 1260 traverse the membrane as a helical segment; it reads PVFLVYDFMLLLCASLQRQIF. The Cytoplasmic segment spans residues 1261 to 1314; it reads EDENKAAVRIMAGDNVEICMNLDAASFSQHNPVPDFIHCRSYLDMSKVIIFSYL. Residues 1315–1327 form a helical membrane-spanning segment; sequence FWFVLTIIFITGT. The Extracellular segment spans residues 1328–1333; the sequence is TRISIF. Residues 1334 to 1346 form a helical membrane-spanning segment; sequence CMGYLVACFYFLL. Topologically, residues 1347 to 1355 are cytoplasmic; the sequence is FGGDLLLKP. A helical membrane pass occupies residues 1356–1381; it reads IKSILRYWDWLIAYNVFVITMKNILS. At 1382–1430 the chain is on the extracellular side; that stretch reads IGACGYIGALVRNSCWLIQAFSLACTVKGYQMPEDDSRCKLPSGEAGII. A helical membrane pass occupies residues 1431-1447; sequence WDSICFAFLLLQRRVFM. Residues 1448 to 1991 lie on the Cytoplasmic side of the membrane; sequence SYYFLHVVAD…YAMYNTLVAR (544 aa). Positions 1475–1515 form a coiled coil; the sequence is TIVKAVKARIEEEKKSMDQLKRQMDRIKARQQKYKKGKERM. Disordered stretches follow at residues 1505–1551 and 1611–1653; these read QQKY…KKKQ and LRQR…KKSD. Positions 1611–1621 are enriched in basic residues; sequence LRQRRKEKKKL. Residues 1622-1633 show a composition bias toward basic and acidic residues; that stretch reads AREEQKERRKGS. The helical transmembrane segment at 1992–2006 threads the bilayer; sequence SEMVCYFVIILNHMT. At 2007 to 2013 the chain is on the extracellular side; that stretch reads SASIITL. The helical transmembrane segment at 2014–2025 threads the bilayer; that stretch reads LLPILIFLWAML. The Cytoplasmic segment spans residues 2026–2031; it reads SVPRPS. A helical transmembrane segment spans residues 2032–2053; it reads RRFWMMAIVYTEVAIVVKYFFQ. The Extracellular portion of the chain corresponds to 2054-2086; it reads FGFFPWNKDLEIYKERPYFPPNIIGVEKKEGYV. A helical transmembrane segment spans residues 2087–2105; that stretch reads LYDLIQLLALFFHRSILKC. The Cytoplasmic portion of the chain corresponds to 2106-2259; it reads HGLWDEDDIV…HPDYSAVTDV (154 aa). 2 disordered regions span residues 2120-2139 and 2164-2205; these read DKEGSDDELSLDQGRRGSSD and IRRK…SVLS. A compositionally biased stretch (low complexity) spans 2170–2197; that stretch reads CSSSQISPRSSFSSNRSKRGSTSTRNSS. A helical transmembrane segment spans residues 2260–2279; the sequence is YVLMFLADTVDFIIIVFGFW. Topologically, residues 2280-2301 are extracellular; the sequence is AFGKHSAAADITSSLSEDQVPG. A helical membrane pass occupies residues 2302-2322; that stretch reads PFLVMVLIQFGTMVVDRALYL. The Cytoplasmic portion of the chain corresponds to 2323–2326; sequence RKTV. Residues 2327-2350 traverse the membrane as a helical segment; sequence LGKVIFQVILVFGIHFWMFFILPG. Residues 2351–2359 lie on the Extracellular side of the membrane; it reads VTERKFSQN. Residues 2360–2382 traverse the membrane as a helical segment; it reads LVAQLWYFVKCVYFGLSAYQIRC. Topologically, residues 2383-2467 are cytoplasmic; it reads GYPTRVLGNF…YPQPRGQKKK (85 aa). Residues 2468–2491 traverse the membrane as a helical segment; the sequence is KAVKYGMGGMIIVLLICIVWFPLL. Residues 2492 to 2739 lie on the Extracellular side of the membrane; it reads FMSLIKSVAG…PSLGFLAGYG (248 aa). N-linked (GlcNAc...) asparagine glycosylation occurs at Asn-2692. The helical transmembrane segment at 2740–2760 threads the bilayer; that stretch reads IMGLYASVVLVIGKFVREFFS. Residues 2761-2822 are Cytoplasmic-facing; the sequence is GISHSIMFEE…MIKWTREKTN (62 aa).

This sequence belongs to the PIEZO (TC 1.A.75) family. Homotrimer; the homotrimer forms a propeller-shaped Piezo channel with a cation-ion conducting pore. Heterotrimeric interaction may occur between PIEZO1 and PIEZO2. Interacts with STOM13. Interacts with TMC7; the interaction inhibits PIEZO2-conducted mechanically activated currents. Interacts with TMC1; the interaction may be part of the MET complex. Interacts with MDFIC (via C-terminus); the interaction prolongs Piezo channel inactivation. Interacts with MDFI (via C-terminus); the interaction prolongs Piezo channel inactivation. In terms of tissue distribution, expressed in bladder, colon, and lung, but less abundant in kidney or skin. Strong expression is observed in dorsal root ganglia (DRG) sensory neurons. Expressed in a wide range of cutaneous low-threshold mechanoreceptors (LTMRs), including Merkel cells and Meissner's corpuscles. Expressed in sensory neurons. Expressed in cochlear inner and outer hair cells and vestibular organ hair cells. Expressed in pulmonary neuroepithelial cell bodies. Expressed in bladder urothelium and sensory neurons of the lower urinary tract. Expressed in sensory endings of proprioceptors innervating muscle spindles and Golgi tendon organs.

Its subcellular location is the cell membrane. The enzyme catalyses Ca(2+)(in) = Ca(2+)(out). Its activity is regulated as follows. Regulated by auxillary subunits MDFIC and MDFI. Channel activity is inhibited by TMEM120aa. Phosphatidic acid and lysophosphatidic acid inhibit Piezo2 channel activity. In terms of biological role, pore-forming subunit of the mechanosensitive non-specific cation Piezo channel required for rapidly adapting mechanically activated (MA) currents and has a key role in sensing touch and tactile pain. Piezo channels are homotrimeric three-blade propeller-shaped structures that utilize a cap-motion and plug-and-latch mechanism to gate their ion-conducting pathways. Expressed in sensory neurons, is essential for diverse physiological processes, including respiratory control, systemic metabolism, urinary function, and proprioception. Mediates airway stretch sensing, enabling efficient respiration at birth and maintaining normal breathing in adults. It regulates brown and beige adipose tissue morphology and function, preventing systemic hypermetabolism. In the lower urinary tract, acts as a sensor in both the bladder urothelium and innervating sensory neurons and is required for bladder-stretch sensing and urethral micturition reflexes, ensuring proper urinary function. Additionally, Piezo2 serves as the principal mechanotransducer in proprioceptors, facilitating proprioception and coordinated body movements. In inner ear hair cells, PIEZO1/2 subunits may constitute part of the mechanotransducer (MET) non-selective cation channel complex where they may act as pore-forming ion-conducting component in the complex. Required for Merkel-cell mechanotransduction. Plays a major role in light-touch mechanosensation. The chain is Piezo-type mechanosensitive ion channel component 2 from Mus musculus (Mouse).